The following is a 199-amino-acid chain: N-(5'-phosphoribosyl)anthranilate isomerase (199 aa).

This sequence belongs to the TrpF family.

The enzyme catalyses N-(5-phospho-beta-D-ribosyl)anthranilate = 1-(2-carboxyphenylamino)-1-deoxy-D-ribulose 5-phosphate. Its pathway is amino-acid biosynthesis; L-tryptophan biosynthesis; L-tryptophan from chorismate: step 3/5. In Sulfolobus acidocaldarius (strain ATCC 33909 / DSM 639 / JCM 8929 / NBRC 15157 / NCIMB 11770), this protein is N-(5'-phosphoribosyl)anthranilate isomerase.